The chain runs to 470 residues: Chromosomal replication initiator protein DnaA (470 aa).

Residues 1–68 (MENFWSLCLG…SALAEEVLST (68 aa)) form a domain I, interacts with DnaA modulators region. A domain II region spans residues 68 to 133 (TPVQIELALY…KKPKTLTETS (66 aa)). The domain III, AAA+ region stretch occupies residues 134–350 (GLNPAFRFDN…GALNRIIAMA (217 aa)). The ATP site is built by Gly-178, Gly-180, Lys-181, and Thr-182. The interval 351–470 (NFTGHAIDVS…IAVLIQVIRD (120 aa)) is domain IV, binds dsDNA.

The protein belongs to the DnaA family. Oligomerizes as a right-handed, spiral filament on DNA at oriC.

The protein resides in the cytoplasm. In terms of biological role, plays an essential role in the initiation and regulation of chromosomal replication. ATP-DnaA binds to the origin of replication (oriC) to initiate formation of the DNA replication initiation complex once per cell cycle. Binds the DnaA box (a 9 base pair repeat at the origin) and separates the double-stranded (ds)DNA. Forms a right-handed helical filament on oriC DNA; dsDNA binds to the exterior of the filament while single-stranded (ss)DNA is stabiized in the filament's interior. The ATP-DnaA-oriC complex binds and stabilizes one strand of the AT-rich DNA unwinding element (DUE), permitting loading of DNA polymerase. After initiation quickly degrades to an ADP-DnaA complex that is not apt for DNA replication. Binds acidic phospholipids. The protein is Chromosomal replication initiator protein DnaA of Methylobacillus flagellatus (strain ATCC 51484 / DSM 6875 / VKM B-1610 / KT).